The following is a 347-amino-acid chain: DNA-directed RNA polymerase subunit alpha (347 aa).

The segment at 1–243 (MLFREGTRLI…DQISVFINFD (243 aa)) is alpha N-terminal domain (alpha-NTD). The interval 255–347 (SGSSDLNDNL…EWKRKQHHEA (93 aa)) is alpha C-terminal domain (alpha-CTD).

The protein belongs to the RNA polymerase alpha chain family. In terms of assembly, homodimer. The RNAP catalytic core consists of 2 alpha, 1 beta, 1 beta' and 1 omega subunit. When a sigma factor is associated with the core the holoenzyme is formed, which can initiate transcription.

It catalyses the reaction RNA(n) + a ribonucleoside 5'-triphosphate = RNA(n+1) + diphosphate. In terms of biological role, DNA-dependent RNA polymerase catalyzes the transcription of DNA into RNA using the four ribonucleoside triphosphates as substrates. This is DNA-directed RNA polymerase subunit alpha from Lawsonia intracellularis (strain PHE/MN1-00).